Consider the following 118-residue polypeptide: Large ribosomal subunit protein uL18 (118 aa).

This sequence belongs to the universal ribosomal protein uL18 family. As to quaternary structure, part of the 50S ribosomal subunit; part of the 5S rRNA/L5/L18/L25 subcomplex. Contacts the 5S and 23S rRNAs.

Functionally, this is one of the proteins that bind and probably mediate the attachment of the 5S RNA into the large ribosomal subunit, where it forms part of the central protuberance. The sequence is that of Large ribosomal subunit protein uL18 from Ralstonia pickettii (strain 12J).